A 121-amino-acid chain; its full sequence is Natriuretic peptides B (121 aa).

An N-terminal signal peptide occupies residues 1–26; it reads MDLLKVLSQMILFLLFLYLSPLGGHS. The segment at 61–89 is disordered; the sequence is LKDQGLTKEHPKRVLRSQGSTLRVQQRPQ. Residues 77-89 are compositionally biased toward polar residues; it reads SQGSTLRVQQRPQ. Cysteine 99 and cysteine 115 are joined by a disulfide.

This sequence belongs to the natriuretic peptide family. In terms of processing, the precursor molecule is proteolytically cleaved by the endoprotease Furin to produce brain natriuretic peptide 45. May undergo further proteolytic cleavage by various proteases such as DPP4, MME and possibly FAP, to give rise to a variety of shorter peptides. May be cleaved at Ser-91 by the prolyl endopeptidase FAP (seprase) activity (in vitro). May be degraded by IDE. During IDE degradation, the resulting products initially increase the activation of NPR1 and can also stimulate NPR2 to produce cGMP before the fragments are completely degraded and inactivated by IDE (in vitro). In terms of tissue distribution, expressed abundantly in the ventricle, and in a lesser extent in the atrium (at protein level).

Its subcellular location is the secreted. Cardiac hormone that plays a key role in mediating cardio-renal homeostasis. May also function as a paracrine antifibrotic factor in the heart. Acts by specifically binding and stimulating NPR1 to produce cGMP, which in turn activates effector proteins that drive various biological responses. Likely involved in regulating the extracellular fluid volume and maintaining the fluid-electrolyte balance through natriuresis, diuresis, kaluresis and chloruresis. This is Natriuretic peptides B (Nppb) from Mus musculus (Mouse).